The following is a 370-amino-acid chain: Germination protease (370 aa).

Positions 1–15 (MEKELDLSQYSVRTD) are excised as a propeptide.

This sequence belongs to the peptidase A25 family. In terms of assembly, homotetramer. In terms of processing, autoproteolytically processed. The inactive tetrameric zymogen termed p46 autoprocesses to a smaller form termed p41, which is active only during spore germination.

It carries out the reaction Endopeptidase action with P4 Glu or Asp, P1 preferably Glu &gt; Asp, P1' hydrophobic and P2' Ala.. Functionally, initiates the rapid degradation of small, acid-soluble proteins during spore germination. The sequence is that of Germination protease (gpr) from Priestia megaterium (strain ATCC 12872 / QMB1551) (Bacillus megaterium).